The following is a 148-amino-acid chain: Pivalyl-CoA mutase small subunit (148 aa).

One can recognise a B12-binding domain in the interval 8–138 (PLRVLVTKIG…TALGQKSRAE (131 aa)). Histidine 21 is a binding site for adenosylcob(III)alamin.

This sequence belongs to the acyl-CoA mutase small subunit family. Monomer in the absence of the PCM large subunit. Weakly interacts with the PCM large subunit; an alpha(2)beta(2) stoichiometry seems to represent the active state of the enzyme. Adenosylcob(III)alamin is required as a cofactor.

It catalyses the reaction 3-methylbutanoyl-CoA = 2,2-dimethylpropanoyl-CoA. In terms of biological role, together with Xaut_5043, catalyzes the reversible isomerization between pivalyl-CoA and isovaleryl-CoA, using radical chemistry. Does not exhibit isobutyryl-CoA mutase (ICM) activity. The polypeptide is Pivalyl-CoA mutase small subunit (Xanthobacter autotrophicus (strain ATCC BAA-1158 / Py2)).